A 377-amino-acid chain; its full sequence is Protein RecA (377 aa).

66–73 (GPESSGKT) is an ATP binding site. The segment at 329–377 (VGVRPEEPTAEPGADAAVTSAAAATDDTAKTVSAPAAKTTKSKAAAAKS) is disordered. Over residues 342–377 (ADAAVTSAAAATDDTAKTVSAPAAKTTKSKAAAAKS) the composition is skewed to low complexity.

This sequence belongs to the RecA family.

Its subcellular location is the cytoplasm. Functionally, can catalyze the hydrolysis of ATP in the presence of single-stranded DNA, the ATP-dependent uptake of single-stranded DNA by duplex DNA, and the ATP-dependent hybridization of homologous single-stranded DNAs. It interacts with LexA causing its activation and leading to its autocatalytic cleavage. This is Protein RecA from Streptomyces avermitilis (strain ATCC 31267 / DSM 46492 / JCM 5070 / NBRC 14893 / NCIMB 12804 / NRRL 8165 / MA-4680).